A 343-amino-acid chain; its full sequence is Transmembrane protein 120A (343 aa).

The Cytoplasmic portion of the chain corresponds to 1–132 (MQSPPPDPLG…KQAKFAYKDE (132 aa)). K130 is a binding site for CoA. The helical transmembrane segment at 133–152 (YEKFKLYLTIILIVISFTCR) threads the bilayer. Residues 153-158 (FLLNSR) are Extracellular-facing. A helical membrane pass occupies residues 159–177 (VTDAAFNFLLVWYYCTLTI). The Cytoplasmic segment spans residues 178–190 (RESILINNGSRIK). CoA is bound by residues S187 and R188. Residues 191–209 (GWWVFHHYVSTFLSGVMLT) form a helical membrane-spanning segment. At 210-218 (WPDGLMYQK) the chain is on the extracellular side. A helical membrane pass occupies residues 219 to 240 (FRNQFLSFSMYQSFVQFLQYYY). Q237, Y240, Q241, and H283 together coordinate CoA. At 241 to 270 (QSGCLYRLRALGERHTMDLTVEGFQSWMWR) the chain is on the cytoplasmic side. The helical transmembrane segment at 271–294 (GLTFLLPFLFFGHFWQLFNALTLF) threads the bilayer. Residues 295–304 (NLARDPECKE) are Extracellular-facing. Residues 305–330 (WQVLMCGLPFLLLFLGNFFTTLRVVH) traverse the membrane as a helical segment. The Cytoplasmic segment spans residues 331 to 343 (QKFHSQQHGSKKD). K332 lines the CoA pocket.

It belongs to the TMEM120 family. As to quaternary structure, homodimer. Forms heterooligomer with TMEM120B. Interacts with PKD2; TMEM120A inhibits PKD2 channel activity through the physical association of PKD2 with TMEM120A.

The protein resides in the cell membrane. It localises to the nucleus inner membrane. It is found in the endoplasmic reticulum. In terms of biological role, multifunctional protein involved in mechanosensation, and plays an essential role in lipid metabolism and adipocyte differentiation. May function as a potential ion channel involved in sensing mechanical stimuli. Mediates the mechanosensitivity of the PKD2-TMEM120A channel complex through direct physical interaction. TMEM120A seems to affect mechanosensation by inhibiting PIEZO2 channels, possibly by altering cellular lipid content. TMEM120A is structurally similar to a lipid-modifying enzyme, ELOVL7, and contains a bound coenzyme A molecule, which suggests it might function as an enzyme in lipid metabolism. Additionnaly, implicated in innate immune response against Zika virus. Acts as a key activator of the antiviral signaling involving STING1. The protein is Transmembrane protein 120A of Rattus norvegicus (Rat).